Reading from the N-terminus, the 127-residue chain is Evasin P467 (127 aa).

Residues 1 to 21 (MALKACITVIAVVYVVQVVRG) form the signal peptide. 4 cysteine pairs are disulfide-bonded: Cys-42–Cys-63, Cys-59–Cys-100, Cys-76–Cys-105, and Cys-95–Cys-114. Residues Asn-49 and Asn-94 are each glycosylated (N-linked (GlcNAc...) asparagine).

The protein localises to the secreted. Functionally, salivary chemokine-binding protein which binds to host chemokines CCL1, CCL2, CCL3 and CCL5. The protein is Evasin P467 of Rhipicephalus pulchellus (Yellow backed tick).